Consider the following 469-residue polypeptide: 3-isopropylmalate dehydratase large subunit (469 aa).

Cysteine 350, cysteine 410, and cysteine 413 together coordinate [4Fe-4S] cluster.

It belongs to the aconitase/IPM isomerase family. LeuC type 1 subfamily. Heterodimer of LeuC and LeuD. Requires [4Fe-4S] cluster as cofactor.

The catalysed reaction is (2R,3S)-3-isopropylmalate = (2S)-2-isopropylmalate. It functions in the pathway amino-acid biosynthesis; L-leucine biosynthesis; L-leucine from 3-methyl-2-oxobutanoate: step 2/4. Its function is as follows. Catalyzes the isomerization between 2-isopropylmalate and 3-isopropylmalate, via the formation of 2-isopropylmaleate. This chain is 3-isopropylmalate dehydratase large subunit, found in Rhizobium etli (strain ATCC 51251 / DSM 11541 / JCM 21823 / NBRC 15573 / CFN 42).